We begin with the raw amino-acid sequence, 190 residues long: Ribosome hibernation promotion factor (190 aa).

It belongs to the HPF/YfiA ribosome-associated protein family. Long HPF subfamily. As to quaternary structure, interacts with 100S ribosomes.

It is found in the cytoplasm. Functionally, required for dimerization of active 70S ribosomes into 100S ribosomes in stationary phase; 100S ribosomes are translationally inactive and sometimes present during exponential growth. In Rhizobium meliloti (strain 1021) (Ensifer meliloti), this protein is Ribosome hibernation promotion factor.